The primary structure comprises 1482 residues: Chromosome partition protein MukB (1482 aa).

Position 34 to 41 (34 to 41 (GGNGAGKS)) interacts with ATP. Coiled-coil stretches lie at residues 337–468 (LNLV…LSVA), 509–604 (QHLA…APIW), 780–805 (RAAR…ATLS), 835–1044 (EAEI…ELVD), 1070–1115 (TNRA…TAKA), and 1210–1265 (EAIE…LQAV). A flexible hinge region spans residues 666-783 (PGGAEDQRLV…AVPLFGRAAR (118 aa)).

It belongs to the SMC family. MukB subfamily. Homodimerization via its hinge domain. Binds to DNA via its C-terminal region. Interacts, and probably forms a ternary complex, with MukE and MukF via its C-terminal region. The complex formation is stimulated by calcium or magnesium. Interacts with tubulin-related protein FtsZ.

The protein resides in the cytoplasm. The protein localises to the nucleoid. Its function is as follows. Plays a central role in chromosome condensation, segregation and cell cycle progression. Functions as a homodimer, which is essential for chromosome partition. Involved in negative DNA supercoiling in vivo, and by this means organize and compact chromosomes. May achieve or facilitate chromosome segregation by condensation DNA from both sides of a centrally located replisome during cell division. This Serratia proteamaculans (strain 568) protein is Chromosome partition protein MukB.